Consider the following 385-residue polypeptide: DNA replication and repair protein RecF (385 aa).

ATP is bound at residue 30 to 37 (GANAAGKT).

The protein belongs to the RecF family.

The protein localises to the cytoplasm. Its function is as follows. The RecF protein is involved in DNA metabolism; it is required for DNA replication and normal SOS inducibility. RecF binds preferentially to single-stranded, linear DNA. It also seems to bind ATP. The polypeptide is DNA replication and repair protein RecF (Herpetosiphon aurantiacus (strain ATCC 23779 / DSM 785 / 114-95)).